A 322-amino-acid polypeptide reads, in one-letter code: Biotin synthase (322 aa).

The 228-residue stretch at 39-266 folds into the Radical SAM core domain; the sequence is NQVQISSLLN…KSVVRLSAGR (228 aa). Residues Cys-54, Cys-58, and Cys-61 each coordinate [4Fe-4S] cluster. Cys-98, Cys-129, Cys-189, and Arg-261 together coordinate [2Fe-2S] cluster.

Belongs to the radical SAM superfamily. Biotin synthase family. Homodimer. [4Fe-4S] cluster serves as cofactor. [2Fe-2S] cluster is required as a cofactor.

The enzyme catalyses (4R,5S)-dethiobiotin + (sulfur carrier)-SH + 2 reduced [2Fe-2S]-[ferredoxin] + 2 S-adenosyl-L-methionine = (sulfur carrier)-H + biotin + 2 5'-deoxyadenosine + 2 L-methionine + 2 oxidized [2Fe-2S]-[ferredoxin]. The protein operates within cofactor biosynthesis; biotin biosynthesis; biotin from 7,8-diaminononanoate: step 2/2. In terms of biological role, catalyzes the conversion of dethiobiotin (DTB) to biotin by the insertion of a sulfur atom into dethiobiotin via a radical-based mechanism. In Vesicomyosocius okutanii subsp. Calyptogena okutanii (strain HA), this protein is Biotin synthase.